A 242-amino-acid chain; its full sequence is Phosphomannomutase 2 (242 aa).

Residue Asp8 is the Nucleophile of the active site. Mg(2+) contacts are provided by Asp8 and Asp10. The Proton donor/acceptor role is filled by Asp10. Alpha-D-mannose 1-phosphate-binding residues include Arg17, Arg119, Arg130, and Arg137. Lys145 is modified (N6-acetyllysine). Ser175 and Asp177 together coordinate alpha-D-mannose 1-phosphate. Residues Asp205, Phe217, Asp219, and Thr222 each contribute to the Mg(2+) site.

It belongs to the eukaryotic PMM family. In terms of assembly, homodimer.

Its subcellular location is the cytoplasm. The catalysed reaction is alpha-D-mannose 1-phosphate = D-mannose 6-phosphate. It participates in nucleotide-sugar biosynthesis; GDP-alpha-D-mannose biosynthesis; alpha-D-mannose 1-phosphate from D-fructose 6-phosphate: step 2/2. Its function is as follows. Involved in the synthesis of the GDP-mannose and dolichol-phosphate-mannose required for a number of critical mannosyl transfer reactions. This is Phosphomannomutase 2 (Pmm2) from Mus musculus (Mouse).